The chain runs to 628 residues: Biosynthetic arginine decarboxylase (628 aa).

K99 is subject to N6-(pyridoxal phosphate)lysine. A substrate-binding site is contributed by 279–289; the sequence is VDVGGGLGIDY.

Belongs to the Orn/Lys/Arg decarboxylase class-II family. SpeA subfamily. Mg(2+) serves as cofactor. The cofactor is pyridoxal 5'-phosphate.

It catalyses the reaction L-arginine + H(+) = agmatine + CO2. It participates in amine and polyamine biosynthesis; agmatine biosynthesis; agmatine from L-arginine: step 1/1. Its function is as follows. Catalyzes the biosynthesis of agmatine from arginine. The polypeptide is Biosynthetic arginine decarboxylase (Xylella fastidiosa (strain M23)).